Reading from the N-terminus, the 528-residue chain is Cytochrome b5 reductase 4 (528 aa).

Methionine 1 is modified (N-acetylmethionine). Residues 1 to 29 (MLNVPSQAFPAPGSQQRVSSQGRSKVPLK) form a disordered region. A compositionally biased stretch (low complexity) spans 13–24 (GSQQRVSSQGRS). In terms of domain architecture, Cytochrome b5 heme-binding spans 54–130 (LIEVTEEELK…LKECLVGRMA (77 aa)). Heme contacts are provided by histidine 89 and histidine 112. Residues 172-263 (LSSPSYDWFQ…KESVSWQCLG (92 aa)) form the CS domain. One can recognise an FAD-binding FR-type domain in the interval 280–392 (LYYRRCQLIS…SGPEGDFKVS (113 aa)). Residues 372 to 387 (DRLQ…GPEG) and 399 to 431 (DLFL…KVKL) each bind FAD.

Belongs to the flavoprotein pyridine nucleotide cytochrome reductase family. FAD is required as a cofactor. In terms of tissue distribution, ubiquitously expressed. Isoform 2 is expressed in testis, brain, skeletal muscle and in the male germline.

The protein resides in the endoplasmic reticulum. It catalyses the reaction 2 Fe(III)-[cytochrome b5] + NADH = 2 Fe(II)-[cytochrome b5] + NAD(+) + H(+). Functionally, NADH-cytochrome b5 reductase involved in endoplasmic reticulum stress response pathway. Plays a critical role in protecting pancreatic beta-cells against oxidant stress, possibly by protecting the cell from excess buildup of reactive oxygen species (ROS). This chain is Cytochrome b5 reductase 4 (Cyb5r4), found in Mus musculus (Mouse).